A 277-amino-acid polypeptide reads, in one-letter code: Hemin import ATP-binding protein HmuV (277 aa).

One can recognise an ABC transporter domain in the interval 25-260 (IHAQGLNLIL…DIIERVYGWP (236 aa)). 57–64 (GPNGAGKS) contributes to the ATP binding site.

This sequence belongs to the ABC transporter superfamily. Heme (hemin) importer (TC 3.A.1.14.5) family. As to quaternary structure, the complex is composed of two ATP-binding proteins (HmuV), two transmembrane proteins (HmuU) and a solute-binding protein (HmuT).

It is found in the cell inner membrane. Functionally, part of the ABC transporter complex HmuTUV involved in hemin import. Responsible for energy coupling to the transport system. This chain is Hemin import ATP-binding protein HmuV, found in Photobacterium profundum (strain SS9).